We begin with the raw amino-acid sequence, 302 residues long: Sulfate adenylyltransferase subunit 2 (302 aa).

It belongs to the PAPS reductase family. CysD subfamily. In terms of assembly, heterodimer composed of CysD, the smaller subunit, and CysN.

The enzyme catalyses sulfate + ATP + H(+) = adenosine 5'-phosphosulfate + diphosphate. The protein operates within sulfur metabolism; hydrogen sulfide biosynthesis; sulfite from sulfate: step 1/3. Its function is as follows. With CysN forms the ATP sulfurylase (ATPS) that catalyzes the adenylation of sulfate producing adenosine 5'-phosphosulfate (APS) and diphosphate, the first enzymatic step in sulfur assimilation pathway. APS synthesis involves the formation of a high-energy phosphoric-sulfuric acid anhydride bond driven by GTP hydrolysis by CysN coupled to ATP hydrolysis by CysD. This chain is Sulfate adenylyltransferase subunit 2, found in Escherichia coli O6:K15:H31 (strain 536 / UPEC).